A 399-amino-acid polypeptide reads, in one-letter code: Acetate kinase (399 aa).

Mg(2+) is bound at residue asparagine 8. Lysine 15 is a binding site for ATP. Position 89 (arginine 89) interacts with substrate. Aspartate 146 serves as the catalytic Proton donor/acceptor. ATP is bound by residues 206–210 (HVGNG), 283–285 (DMR), and 331–335 (GMGEN). Residue glutamate 383 participates in Mg(2+) binding.

Belongs to the acetokinase family. In terms of assembly, homodimer. It depends on Mg(2+) as a cofactor. The cofactor is Mn(2+).

It localises to the cytoplasm. It carries out the reaction acetate + ATP = acetyl phosphate + ADP. The protein operates within metabolic intermediate biosynthesis; acetyl-CoA biosynthesis; acetyl-CoA from acetate: step 1/2. In terms of biological role, catalyzes the formation of acetyl phosphate from acetate and ATP. Can also catalyze the reverse reaction. The polypeptide is Acetate kinase (Streptococcus equi subsp. zooepidemicus (strain H70)).